The primary structure comprises 411 residues: ATPase family AAA domain-containing protein 3C (411 aa).

177-184 (GPPGTGKT) is a binding site for ATP.

The protein belongs to the AAA ATPase family.

The sequence is that of ATPase family AAA domain-containing protein 3C (ATAD3C) from Homo sapiens (Human).